The sequence spans 196 residues: Glycerol-3-phosphate acyltransferase (196 aa).

6 helical membrane passes run valine 5–cysteine 25, phenylalanine 53–alanine 73, proline 80–phenylalanine 100, glycine 107–leucine 127, tryptophan 130–isoleucine 150, and phenylalanine 153–leucine 173.

This sequence belongs to the PlsY family. As to quaternary structure, probably interacts with PlsX.

Its subcellular location is the cell inner membrane. The catalysed reaction is an acyl phosphate + sn-glycerol 3-phosphate = a 1-acyl-sn-glycero-3-phosphate + phosphate. The protein operates within lipid metabolism; phospholipid metabolism. Functionally, catalyzes the transfer of an acyl group from acyl-phosphate (acyl-PO(4)) to glycerol-3-phosphate (G3P) to form lysophosphatidic acid (LPA). This enzyme utilizes acyl-phosphate as fatty acyl donor, but not acyl-CoA or acyl-ACP. The sequence is that of Glycerol-3-phosphate acyltransferase from Actinobacillus pleuropneumoniae serotype 7 (strain AP76).